A 109-amino-acid chain; its full sequence is Thiosulfate sulfurtransferase GlpE (109 aa).

Positions 16–104 (REQGAVVVDV…WRTTFPSETA (89 aa)) constitute a Rhodanese domain. The active-site Cysteine persulfide intermediate is the cysteine 64.

It belongs to the GlpE family.

It is found in the cytoplasm. The enzyme catalyses thiosulfate + hydrogen cyanide = thiocyanate + sulfite + 2 H(+). It carries out the reaction thiosulfate + [thioredoxin]-dithiol = [thioredoxin]-disulfide + hydrogen sulfide + sulfite + 2 H(+). Its function is as follows. Transferase that catalyzes the transfer of sulfur from thiosulfate to thiophilic acceptors such as cyanide or dithiols. May function in a CysM-independent thiosulfate assimilation pathway by catalyzing the conversion of thiosulfate to sulfite, which can then be used for L-cysteine biosynthesis. The sequence is that of Thiosulfate sulfurtransferase GlpE from Pseudomonas fluorescens (strain Pf0-1).